The chain runs to 826 residues: Ubiquitin carboxyl-terminal hydrolase 16 (826 aa).

The segment at 1-23 (MGKKRTKGKSVPEKASSESTEPM) is disordered. A UBP-type zinc finger spans residues 22-141 (PMCRHLRKGL…QVVDYVRKQA (120 aa)). Cys24, His26, Cys48, Cys51, Cys73, Cys76, Cys81, His89, His93, His102, Cys115, and Cys118 together coordinate Zn(2+). A Glycyl lysine isopeptide (Lys-Gly) (interchain with G-Cter in SUMO2) cross-link involves residue Lys139. Residues 145 to 184 (TSKPAEKNNGHIELENKKLEKESKNEQEREKSESMAKENI) form a disordered region. Residues 148 to 180 (PAEKNNGHIELENKKLEKESKNEQEREKSESMA) are compositionally biased toward basic and acidic residues. Ser188 is modified (phosphoserine). Residues 195–825 (KGLSNLGNTC…QAYLLFYERI (631 aa)) enclose the USP domain. Cys204 (nucleophile) is an active-site residue. Positions 392-407 (QSGKKNINDKNVKKTM) are enriched in basic and acidic residues. Disordered stretches follow at residues 392 to 456 (QSGK…RRQQ) and 526 to 553 (ADER…TSAP). Residues 408–419 (EEEDKDSEEEKD) show a composition bias toward acidic residues. A Phosphoserine modification is found at Ser414. Basic residues predominate over residues 436–456 (HTQKKAKKQAKKQAKNQRRQQ). Basic and acidic residues predominate over residues 526 to 537 (ADERKCPEHPEV). Residues 539 to 551 (SVSTESDLGSLTS) show a composition bias toward polar residues. His760 acts as the Proton acceptor in catalysis.

It belongs to the peptidase C19 family. USP16 subfamily. Homotetramer. Associates with late pre-40S ribosomes. Interacts with CEP78; promoting deubiquitination of tektins. In terms of processing, phosphorylated at the onset of mitosis and dephosphorylated during the metaphase/anaphase transition. Phosphorylation by AURKB enhances the deubiquitinase activity.

It localises to the nucleus. It carries out the reaction Thiol-dependent hydrolysis of ester, thioester, amide, peptide and isopeptide bonds formed by the C-terminal Gly of ubiquitin (a 76-residue protein attached to proteins as an intracellular targeting signal).. In terms of biological role, specifically deubiquitinates 'Lys-120' of histone H2A (H2AK119Ub), a specific tag for epigenetic transcriptional repression, thereby acting as a coactivator. Deubiquitination of histone H2A is a prerequisite for subsequent phosphorylation at 'Ser-11' of histone H3 (H3S10ph), and is required for chromosome segregation when cells enter into mitosis. In resting B- and T-lymphocytes, phosphorylation by AURKB leads to enhance its activity, thereby maintaining transcription in resting lymphocytes. Regulates Hox gene expression via histone H2A deubiquitination. Prefers nucleosomal substrates. Does not deubiquitinate histone H2B. Also deubiquitinates non-histone proteins, such as ribosomal protein RPS27A: deubiquitination of monoubiquitinated RPS27A promotes maturation of the 40S ribosomal subunit. Also mediates deubiquitination of tektin proteins (TEKT1, TEKT2, TEK3, TEKT4 and TEKT5), promoting their stability. This Rattus norvegicus (Rat) protein is Ubiquitin carboxyl-terminal hydrolase 16 (Usp16).